The primary structure comprises 64 residues: Large ribosomal subunit protein bL35 (64 aa).

2 disordered regions span residues Met-1 to Ile-22 and Glu-34 to Gly-64. Over residues Glu-34 to Gly-46 the composition is skewed to basic and acidic residues. Polar residues predominate over residues Val-50–Gly-64.

The protein belongs to the bacterial ribosomal protein bL35 family.

The polypeptide is Large ribosomal subunit protein bL35 (Mycolicibacterium paratuberculosis (strain ATCC BAA-968 / K-10) (Mycobacterium paratuberculosis)).